Here is a 237-residue protein sequence, read N- to C-terminus: Ribonuclease 3 (237 aa).

The 130-residue stretch at 4 to 133 (LTELENSLGV…VLAAIYIDKG (130 aa)) folds into the RNase III domain. Glu46 serves as a coordination point for Mg(2+). Catalysis depends on residues Asp50 and Glu122. Mg(2+) is bound at residue Glu122. The region spanning 160–229 (DYKSRLQELI…AKVALQQFEN (70 aa)) is the DRBM domain.

The protein belongs to the ribonuclease III family. Homodimer. Mg(2+) is required as a cofactor.

It localises to the cytoplasm. The catalysed reaction is Endonucleolytic cleavage to 5'-phosphomonoester.. Its function is as follows. Digests double-stranded RNA. Involved in the processing of primary rRNA transcript to yield the immediate precursors to the large and small rRNAs (23S and 16S). Processes some mRNAs, and tRNAs when they are encoded in the rRNA operon. Processes pre-crRNA and tracrRNA of type II CRISPR loci if present in the organism. This is Ribonuclease 3 from Dehalococcoides mccartyi (strain CBDB1).